Reading from the N-terminus, the 323-residue chain is Serine acetyltransferase 2 (323 aa).

The segment at alanine 302–serine 323 is disordered. Positions aspartate 313–serine 323 are enriched in basic and acidic residues.

Belongs to the transferase hexapeptide repeat family. In terms of assembly, homomultimer. As to expression, ubiquitously expressed at low levels. Localized in vascular tissues, particularly in phloem.

It is found in the cytoplasm. The enzyme catalyses L-serine + acetyl-CoA = O-acetyl-L-serine + CoA. Its pathway is amino-acid biosynthesis; L-cysteine biosynthesis; L-cysteine from L-serine: step 1/2. The polypeptide is Serine acetyltransferase 2 (Arabidopsis thaliana (Mouse-ear cress)).